A 354-amino-acid chain; its full sequence is MGCTLSAEERAALERSKAIEKNLKEDGISAAKDVKLLLLGAGESGKSTIVKQMKIIHEDGFSGEDVKQYKPVVYSNTIQSLAAIVRAMDTLGIEYGDKERKADAKMVCDVVSRMEDTEPFSPELLSAMMRLWGDSGIQECFNRSREYQLNDSAKYYLDSLDRIGAADYQPTEQDILRTRVKTTGIVETHFTFKNLHFRLFDVGGQRSERKKWIHCFEDVTAIIFCVALSGYDQVLHEDETTNRMHESLMLFDSICNNKFFIDTSIILFLNKKDLFGEKIKKSPLTICFPEYTGSNTYEDAAAYIQAQFESKNRSPNKEIYCHMTCATDTNNIQVVFDAVTDIIIANNLRGCGLY.

Gly-2 is lipidated: N-myristoyl glycine. Cys-3 carries S-palmitoyl cysteine lipidation. The region spanning 32–354 (KDVKLLLLGA…ANNLRGCGLY (323 aa)) is the G-alpha domain. The segment at 35–48 (KLLLLGAGESGKST) is G1 motif. GTP contacts are provided by Glu-43, Lys-46, Ser-47, Thr-48, Ser-152, Leu-176, Arg-177, Thr-178, and Arg-179. Ser-47 lines the Mg(2+) pocket. The segment at 174–182 (DILRTRVKT) is G2 motif. Thr-182 provides a ligand contact to Mg(2+). The segment at 197–206 (FRLFDVGGQR) is G3 motif. Gln-205 is subject to 5-glutamyl histamine. Residues 266-273 (ILFLNKKD) form a G4 motif region. GTP contacts are provided by Asn-270, Asp-273, and Cys-325. Positions 324-329 (TCATDT) are G5 motif. The S-palmitoyl cysteine moiety is linked to residue Cys-351.

It belongs to the G-alpha family. G(i/o/t/z) subfamily. G proteins are composed of 3 units; alpha, beta and gamma. The alpha chain contains the guanine nucleotide binding site. Forms a complex with GNB1 and GNG3. Interacts with RGS14. Interacts with RGS16. Interacts with RGS19. Interacts (when palmitoylated) with ADGRG3. Histaminylated at Gln-205 residues by TGM2.

The protein localises to the cell membrane. It localises to the membrane. The catalysed reaction is GTP + H2O = GDP + phosphate + H(+). The GTPase activity is promoted by GTPAse activators, such as RGS14, RGS16 and RGS19. Its function is as follows. Guanine nucleotide-binding proteins (G proteins) function as transducers downstream of G protein-coupled receptors (GPCRs) in numerous signaling cascades. The alpha chain contains the guanine nucleotide binding site and alternates between an active, GTP-bound state and an inactive, GDP-bound state. Signaling by an activated GPCR promotes GDP release and GTP binding. The alpha subunit has a low GTPase activity that converts bound GTP to GDP, thereby terminating the signal. Both GDP release and GTP hydrolysis are modulated by numerous regulatory proteins. Signaling is mediated via effector proteins, such as adenylate cyclase. Inhibits adenylate cyclase activity, leading to decreased intracellular cAMP levels. In Bos taurus (Bovine), this protein is Guanine nucleotide-binding protein G(o) subunit alpha (GNAO1).